The chain runs to 266 residues: Undecaprenyl-diphosphatase (266 aa).

7 helical membrane passes run 41 to 61, 82 to 102, 106 to 126, 140 to 160, 180 to 200, 213 to 233, and 245 to 265; these read NLAF…VILW, YVIN…FFKD, AIFG…AALL, ISMK…LPGL, LAQF…LLDG, IPTL…CLAC, and LIYF…VSQL.

The protein belongs to the UppP family.

The protein resides in the cell inner membrane. The enzyme catalyses di-trans,octa-cis-undecaprenyl diphosphate + H2O = di-trans,octa-cis-undecaprenyl phosphate + phosphate + H(+). Functionally, catalyzes the dephosphorylation of undecaprenyl diphosphate (UPP). Confers resistance to bacitracin. The polypeptide is Undecaprenyl-diphosphatase (Bacteroides fragilis (strain ATCC 25285 / DSM 2151 / CCUG 4856 / JCM 11019 / LMG 10263 / NCTC 9343 / Onslow / VPI 2553 / EN-2)).